Reading from the N-terminus, the 397-residue chain is Polygalacturonase (397 aa).

Residues 1-22 (MGSYLGIYTILVLCLLGYSANA) form the signal peptide. PbH1 repeat units follow at residues 169–195 (GKNM…HLGR), 196–217 (CEGV…SVGD), 219–239 (MKNL…SVGS), and 249–270 (VTDI…RIKT). N171 is a glycosylation site (N-linked (GlcNAc...) asparagine). D210 serves as the catalytic Proton donor. A disulfide bridge connects residues C212 and C229. H233 is a catalytic residue. N256 carries N-linked (GlcNAc...) asparagine glycosylation. Disulfide bonds link C341-C347 and C370-C386.

The protein belongs to the glycosyl hydrolase 28 family. As to expression, pollen.

The protein localises to the secreted. It localises to the cell wall. It carries out the reaction (1,4-alpha-D-galacturonosyl)n+m + H2O = (1,4-alpha-D-galacturonosyl)n + (1,4-alpha-D-galacturonosyl)m.. May function in depolymerizing pectin during pollen development, germination, and tube growth. This chain is Polygalacturonase, found in Brassica napus (Rape).